The chain runs to 148 residues: Large ribosomal subunit protein bL9 (148 aa).

This sequence belongs to the bacterial ribosomal protein bL9 family.

Binds to the 23S rRNA. The protein is Large ribosomal subunit protein bL9 of Heliobacterium modesticaldum (strain ATCC 51547 / Ice1).